We begin with the raw amino-acid sequence, 200 residues long: Holliday junction branch migration complex subunit RuvA (200 aa).

The interval 1–63 (MIAFVRGQVA…EDSLTLFGFA (63 aa)) is domain I. The interval 64–142 (DEDEKQTFEL…APTGAGRSAG (79 aa)) is domain II. Residues 142-146 (GVPAP) are flexible linker. Positions 147–200 (AGAVWRDQVHQGLVGLGWPVRDAEKAVAAVAPEAGDVPDVAALLRAALRTLSKA) are domain III.

The protein belongs to the RuvA family. In terms of assembly, homotetramer. Forms an RuvA(8)-RuvB(12)-Holliday junction (HJ) complex. HJ DNA is sandwiched between 2 RuvA tetramers; dsDNA enters through RuvA and exits via RuvB. An RuvB hexamer assembles on each DNA strand where it exits the tetramer. Each RuvB hexamer is contacted by two RuvA subunits (via domain III) on 2 adjacent RuvB subunits; this complex drives branch migration. In the full resolvosome a probable DNA-RuvA(4)-RuvB(12)-RuvC(2) complex forms which resolves the HJ.

It localises to the cytoplasm. In terms of biological role, the RuvA-RuvB-RuvC complex processes Holliday junction (HJ) DNA during genetic recombination and DNA repair, while the RuvA-RuvB complex plays an important role in the rescue of blocked DNA replication forks via replication fork reversal (RFR). RuvA specifically binds to HJ cruciform DNA, conferring on it an open structure. The RuvB hexamer acts as an ATP-dependent pump, pulling dsDNA into and through the RuvAB complex. HJ branch migration allows RuvC to scan DNA until it finds its consensus sequence, where it cleaves and resolves the cruciform DNA. This chain is Holliday junction branch migration complex subunit RuvA, found in Nocardioides sp. (strain ATCC BAA-499 / JS614).